The following is a 62-amino-acid chain: Photosystem II reaction center protein Z (62 aa).

A run of 2 helical transmembrane segments spans residues 8 to 28 and 41 to 61; these read TMFA…ITFA and FSGV…NSFI.

Belongs to the PsbZ family. In terms of assembly, PSII is composed of 1 copy each of membrane proteins PsbA, PsbB, PsbC, PsbD, PsbE, PsbF, PsbH, PsbI, PsbJ, PsbK, PsbL, PsbM, PsbT, PsbY, PsbZ, Psb30/Ycf12, at least 3 peripheral proteins of the oxygen-evolving complex and a large number of cofactors. It forms dimeric complexes.

It localises to the plastid. Its subcellular location is the chloroplast thylakoid membrane. May control the interaction of photosystem II (PSII) cores with the light-harvesting antenna, regulates electron flow through the 2 photosystem reaction centers. PSII is a light-driven water plastoquinone oxidoreductase, using light energy to abstract electrons from H(2)O, generating a proton gradient subsequently used for ATP formation. The sequence is that of Photosystem II reaction center protein Z from Welwitschia mirabilis (Tree tumbo).